The following is a 285-amino-acid chain: Sulfoquinovosyl glycerol transport system permease protein SmoH (285 aa).

6 helical membrane-spanning segments follow: residues Phe21–Thr41, Phe83–Ala103, Ile115–Phe135, Leu150–Phe170, Val195–Ala215, and Pro250–Phe270. Residues Leu79–Phe270 form the ABC transmembrane type-1 domain.

The protein belongs to the binding-protein-dependent transport system permease family. The complex is probably composed of two ATP-binding proteins (SmoE), two transmembrane proteins (SmoG and SmoH) and a solute-binding protein (SmoF).

It localises to the cell inner membrane. Functionally, part of the ABC transporter complex SmoEFGH involved in sulfoquinovosyl glycerol (SQGro) uptake. Responsible for the translocation of the substrate across the membrane. This Agrobacterium fabrum (strain C58 / ATCC 33970) (Agrobacterium tumefaciens (strain C58)) protein is Sulfoquinovosyl glycerol transport system permease protein SmoH.